The chain runs to 245 residues: Protein ARV 1 (245 aa).

Transmembrane regions (helical) follow at residues 70 to 90 (INPA…AYLL), 117 to 137 (IKVL…FAIA), 163 to 183 (IFLL…FVDI), 200 to 220 (TMTR…LVGQ), and 224 to 244 (PTIF…FFRI).

It belongs to the ARV1 family. In terms of tissue distribution, restricted to tissues in which cells are actively dividing or expanding. Mostly expressed in roots and flowers, and, to a lower extent, in stems and leaves.

The protein localises to the endoplasmic reticulum membrane. In terms of biological role, mediator of sterol homeostasis involved in sterol uptake, trafficking and distribution into membranes. Also regulates the sphingolipid metabolism. This Arabidopsis thaliana (Mouse-ear cress) protein is Protein ARV 1.